Reading from the N-terminus, the 901-residue chain is Alanine--tRNA ligase (901 aa).

Zn(2+)-binding residues include H581, H585, C684, and H688.

Belongs to the class-II aminoacyl-tRNA synthetase family. Zn(2+) is required as a cofactor.

The protein resides in the cytoplasm. The catalysed reaction is tRNA(Ala) + L-alanine + ATP = L-alanyl-tRNA(Ala) + AMP + diphosphate. Its function is as follows. Catalyzes the attachment of alanine to tRNA(Ala) in a two-step reaction: alanine is first activated by ATP to form Ala-AMP and then transferred to the acceptor end of tRNA(Ala). Also edits incorrectly charged Ser-tRNA(Ala) and Gly-tRNA(Ala) via its editing domain. The protein is Alanine--tRNA ligase of Mycobacterium marinum (strain ATCC BAA-535 / M).